Here is a 95-residue protein sequence, read N- to C-terminus: Aspartyl/glutamyl-tRNA(Asn/Gln) amidotransferase subunit C (95 aa).

The protein belongs to the GatC family. In terms of assembly, heterotrimer of A, B and C subunits.

It carries out the reaction L-glutamyl-tRNA(Gln) + L-glutamine + ATP + H2O = L-glutaminyl-tRNA(Gln) + L-glutamate + ADP + phosphate + H(+). It catalyses the reaction L-aspartyl-tRNA(Asn) + L-glutamine + ATP + H2O = L-asparaginyl-tRNA(Asn) + L-glutamate + ADP + phosphate + 2 H(+). Functionally, allows the formation of correctly charged Asn-tRNA(Asn) or Gln-tRNA(Gln) through the transamidation of misacylated Asp-tRNA(Asn) or Glu-tRNA(Gln) in organisms which lack either or both of asparaginyl-tRNA or glutaminyl-tRNA synthetases. The reaction takes place in the presence of glutamine and ATP through an activated phospho-Asp-tRNA(Asn) or phospho-Glu-tRNA(Gln). In Pelodictyon phaeoclathratiforme (strain DSM 5477 / BU-1), this protein is Aspartyl/glutamyl-tRNA(Asn/Gln) amidotransferase subunit C.